A 544-amino-acid polypeptide reads, in one-letter code: CTP synthase (544 aa).

Residues 1–265 (MTKFIFVTGG…DNIITEQLQL (265 aa)) are amidoligase domain. S13 provides a ligand contact to CTP. Position 13 (S13) interacts with UTP. ATP-binding positions include 14–19 (SLGKGI) and D71. Positions 71 and 139 each coordinate Mg(2+). Residues 146–148 (DIE), 186–191 (KTKPTQ), and K222 each bind CTP. UTP-binding positions include 186–191 (KTKPTQ) and K222. The Glutamine amidotransferase type-1 domain occupies 290 to 544 (KIAMVGKYVD…VKAALNNKKA (255 aa)). G353 serves as a coordination point for L-glutamine. Catalysis depends on C380, which acts as the Nucleophile; for glutamine hydrolysis. Residues 381–384 (LGMQ), E404, and R471 each bind L-glutamine. Active-site residues include H517 and E519.

It belongs to the CTP synthase family. Homotetramer.

It carries out the reaction UTP + L-glutamine + ATP + H2O = CTP + L-glutamate + ADP + phosphate + 2 H(+). The catalysed reaction is L-glutamine + H2O = L-glutamate + NH4(+). It catalyses the reaction UTP + NH4(+) + ATP = CTP + ADP + phosphate + 2 H(+). The protein operates within pyrimidine metabolism; CTP biosynthesis via de novo pathway; CTP from UDP: step 2/2. With respect to regulation, allosterically activated by GTP, when glutamine is the substrate; GTP has no effect on the reaction when ammonia is the substrate. The allosteric effector GTP functions by stabilizing the protein conformation that binds the tetrahedral intermediate(s) formed during glutamine hydrolysis. Inhibited by the product CTP, via allosteric rather than competitive inhibition. In terms of biological role, catalyzes the ATP-dependent amination of UTP to CTP with either L-glutamine or ammonia as the source of nitrogen. Regulates intracellular CTP levels through interactions with the four ribonucleotide triphosphates. The protein is CTP synthase of Neisseria meningitidis serogroup C / serotype 2a (strain ATCC 700532 / DSM 15464 / FAM18).